The primary structure comprises 277 residues: Phosphatidylglycerol--prolipoprotein diacylglyceryl transferase (277 aa).

Transmembrane regions (helical) follow at residues 15 to 35 (IHVR…TFMS), 50 to 70 (IDLL…YYVI), 89 to 109 (GGIA…VFCY), and 112 to 132 (FLPP…AQVL). Arg-134 is an a 1,2-diacyl-sn-glycero-3-phospho-(1'-sn-glycerol) binding site. Helical transmembrane passes span 174-194 (KPTF…ILSL), 204-224 (GEVF…VEGM), and 234-254 (VIRV…ILFV).

It belongs to the Lgt family.

It localises to the cell membrane. The enzyme catalyses L-cysteinyl-[prolipoprotein] + a 1,2-diacyl-sn-glycero-3-phospho-(1'-sn-glycerol) = an S-1,2-diacyl-sn-glyceryl-L-cysteinyl-[prolipoprotein] + sn-glycerol 1-phosphate + H(+). Its pathway is protein modification; lipoprotein biosynthesis (diacylglyceryl transfer). Functionally, catalyzes the transfer of the diacylglyceryl group from phosphatidylglycerol to the sulfhydryl group of the N-terminal cysteine of a prolipoprotein, the first step in the formation of mature lipoproteins. In Lactobacillus delbrueckii subsp. bulgaricus (strain ATCC 11842 / DSM 20081 / BCRC 10696 / JCM 1002 / NBRC 13953 / NCIMB 11778 / NCTC 12712 / WDCM 00102 / Lb 14), this protein is Phosphatidylglycerol--prolipoprotein diacylglyceryl transferase.